A 196-amino-acid polypeptide reads, in one-letter code: Peptide deformylase (196 aa).

Residues C97 and H139 each contribute to the Fe cation site. Residue E140 is part of the active site. H143 serves as a coordination point for Fe cation. Basic and acidic residues predominate over residues L171–A187. Residues L171–L196 are disordered.

The protein belongs to the polypeptide deformylase family. Fe(2+) is required as a cofactor.

The catalysed reaction is N-terminal N-formyl-L-methionyl-[peptide] + H2O = N-terminal L-methionyl-[peptide] + formate. In terms of biological role, removes the formyl group from the N-terminal Met of newly synthesized proteins. Requires at least a dipeptide for an efficient rate of reaction. N-terminal L-methionine is a prerequisite for activity but the enzyme has broad specificity at other positions. This Methylocella silvestris (strain DSM 15510 / CIP 108128 / LMG 27833 / NCIMB 13906 / BL2) protein is Peptide deformylase.